The primary structure comprises 157 residues: Jacalin-related lectin 15 (157 aa).

One can recognise a Jacalin-type lectin domain in the interval 13-152 (ADKLEAKGGN…LTSLGAYFAP (140 aa)).

This sequence belongs to the jacalin lectin family. In terms of tissue distribution, expressed in stems, leaves and flowers. Not detected in roots.

Functionally, confers broad resistance to potexviruses. Inhibits virus accumulation at the cellular level. The polypeptide is Jacalin-related lectin 15 (JAL15) (Arabidopsis thaliana (Mouse-ear cress)).